An 803-amino-acid chain; its full sequence is Phenylalanine--tRNA ligase beta subunit (803 aa).

The region spanning 39–151 (SMKFSGIKIG…KNAIIGEDIK (113 aa)) is the tRNA-binding domain. Residues 406 to 482 (PKKILIKLYK…RFYGFEKIPI (77 aa)) form the B5 domain. Asp466 and Asp470 together coordinate Mg(2+). Positions 707 to 800 (SDIPFNYRDI…LKKNFLIEIR (94 aa)) constitute an FDX-ACB domain.

This sequence belongs to the phenylalanyl-tRNA synthetase beta subunit family. Type 1 subfamily. In terms of assembly, tetramer of two alpha and two beta subunits. Requires Mg(2+) as cofactor.

The protein resides in the cytoplasm. It carries out the reaction tRNA(Phe) + L-phenylalanine + ATP = L-phenylalanyl-tRNA(Phe) + AMP + diphosphate + H(+). The protein is Phenylalanine--tRNA ligase beta subunit of Wigglesworthia glossinidia brevipalpis.